Reading from the N-terminus, the 202-residue chain is Large ribosomal subunit protein eL13 (202 aa).

A disordered region spans residues 183–202 (GIREKRAKEKAEAEAEKAKK).

This sequence belongs to the eukaryotic ribosomal protein eL13 family. In terms of assembly, component of the large ribosomal subunit. Mature ribosomes consist of a small (40S) and a large (60S) subunit. The 40S subunit contains about 32 different proteins and 1 molecule of RNA (18S). The 60S subunit contains 45 different proteins and 3 molecules of RNA (25S, 5.8S and 5S).

The protein localises to the cytoplasm. Its function is as follows. Component of the ribosome, a large ribonucleoprotein complex responsible for the synthesis of proteins in the cell. The small ribosomal subunit (SSU) binds messenger RNAs (mRNAs) and translates the encoded message by selecting cognate aminoacyl-transfer RNA (tRNA) molecules. The large subunit (LSU) contains the ribosomal catalytic site termed the peptidyl transferase center (PTC), which catalyzes the formation of peptide bonds, thereby polymerizing the amino acids delivered by tRNAs into a polypeptide chain. The nascent polypeptides leave the ribosome through a tunnel in the LSU and interact with protein factors that function in enzymatic processing, targeting, and the membrane insertion of nascent chains at the exit of the ribosomal tunnel. In Candida albicans (strain SC5314 / ATCC MYA-2876) (Yeast), this protein is Large ribosomal subunit protein eL13.